The chain runs to 168 residues: Phosphopantetheine adenylyltransferase (168 aa).

T14 is a binding site for substrate. Residues 14–15 (TF) and H22 each bind ATP. Residues K46, L78, and R92 each coordinate substrate. Residues 93 to 95 (GLR), E103, and 128 to 134 (YSFISSS) contribute to the ATP site.

This sequence belongs to the bacterial CoaD family. In terms of assembly, homohexamer. Mg(2+) serves as cofactor.

The protein localises to the cytoplasm. The enzyme catalyses (R)-4'-phosphopantetheine + ATP + H(+) = 3'-dephospho-CoA + diphosphate. It participates in cofactor biosynthesis; coenzyme A biosynthesis; CoA from (R)-pantothenate: step 4/5. Its function is as follows. Reversibly transfers an adenylyl group from ATP to 4'-phosphopantetheine, yielding dephospho-CoA (dPCoA) and pyrophosphate. This Xanthomonas campestris pv. campestris (strain B100) protein is Phosphopantetheine adenylyltransferase.